Here is a 348-residue protein sequence, read N- to C-terminus: Uroporphyrinogen decarboxylase (348 aa).

Residues 28-32 (RQAGR), Asp-78, Tyr-154, Thr-209, and His-325 contribute to the substrate site.

The protein belongs to the uroporphyrinogen decarboxylase family. As to quaternary structure, homodimer.

It is found in the cytoplasm. It catalyses the reaction uroporphyrinogen III + 4 H(+) = coproporphyrinogen III + 4 CO2. It functions in the pathway porphyrin-containing compound metabolism; protoporphyrin-IX biosynthesis; coproporphyrinogen-III from 5-aminolevulinate: step 4/4. Its function is as follows. Catalyzes the decarboxylation of four acetate groups of uroporphyrinogen-III to yield coproporphyrinogen-III. The chain is Uroporphyrinogen decarboxylase from Rhodopseudomonas palustris (strain BisB5).